The primary structure comprises 95 residues: Small ribosomal subunit protein bS6 (95 aa).

It belongs to the bacterial ribosomal protein bS6 family.

Its function is as follows. Binds together with bS18 to 16S ribosomal RNA. The polypeptide is Small ribosomal subunit protein bS6 (Clostridium kluyveri (strain NBRC 12016)).